We begin with the raw amino-acid sequence, 173 residues long: Large ribosomal subunit protein uL29c (173 aa).

A chloroplast-targeting transit peptide spans M1–M60. Residues K143–A173 are disordered. S172 carries the post-translational modification Phosphoserine.

This sequence belongs to the universal ribosomal protein uL29 family. As to quaternary structure, part of the 50S ribosomal subunit.

It localises to the plastid. It is found in the chloroplast. This is Large ribosomal subunit protein uL29c (RPL29) from Arabidopsis thaliana (Mouse-ear cress).